Here is a 395-residue protein sequence, read N- to C-terminus: 1-deoxy-D-xylulose 5-phosphate reductoisomerase (395 aa).

NADPH contacts are provided by threonine 10, glycine 11, serine 12, isoleucine 13, and asparagine 123. Lysine 124 contributes to the 1-deoxy-D-xylulose 5-phosphate binding site. Residue glutamate 125 coordinates NADPH. Aspartate 149 contacts Mn(2+). The 1-deoxy-D-xylulose 5-phosphate site is built by serine 150, glutamate 151, serine 185, and histidine 208. Glutamate 151 is a binding site for Mn(2+). NADPH is bound at residue glycine 214. 4 residues coordinate 1-deoxy-D-xylulose 5-phosphate: serine 221, asparagine 226, lysine 227, and glutamate 230. Glutamate 230 contacts Mn(2+).

This sequence belongs to the DXR family. It depends on Mg(2+) as a cofactor. Mn(2+) is required as a cofactor.

It carries out the reaction 2-C-methyl-D-erythritol 4-phosphate + NADP(+) = 1-deoxy-D-xylulose 5-phosphate + NADPH + H(+). It functions in the pathway isoprenoid biosynthesis; isopentenyl diphosphate biosynthesis via DXP pathway; isopentenyl diphosphate from 1-deoxy-D-xylulose 5-phosphate: step 1/6. Catalyzes the NADPH-dependent rearrangement and reduction of 1-deoxy-D-xylulose-5-phosphate (DXP) to 2-C-methyl-D-erythritol 4-phosphate (MEP). This Shewanella sediminis (strain HAW-EB3) protein is 1-deoxy-D-xylulose 5-phosphate reductoisomerase.